Reading from the N-terminus, the 414-residue chain is MGAGKKIFGIVLAGGEGKRLMPLTTDRAKPAVPFGGQYRLIDFALSNLINSQLRQIVVLTQYKSHSLDRHISQTWRPDGMLNSYIASVPAQQRLGKRWFSGSADAILQSINLLRDEKPDIVVVVGADHVYRMDFGQMIRSHLDSGSSVTVAAIRQPVSLADQFGVIEVDPASPERIAAFREKPSDPVALPESPGEVLASMGNYVFTADALIAAVRRDADRPDSNHDMGGDIIPDFVARGEAGVYDFTNNEVPGSTDRDRYYWRDVGTIDSFFEAHQDLISALPVFNLYNRQWPIFSQVLNSPPAKIVRDGRGALGTTIDSIVSLGSVISGAHLERSVLGPWATVDSGAKVIDSVVFERALIEPNAFVGRAILDKDVVVAAGASIGVDPDRDRARGFTVTESGITVVGKGVHVVP.

Alpha-D-glucose 1-phosphate-binding positions include Gly164, 181–182, and Ser199; that span reads EK.

This sequence belongs to the bacterial/plant glucose-1-phosphate adenylyltransferase family. In terms of assembly, homotetramer.

The catalysed reaction is alpha-D-glucose 1-phosphate + ATP + H(+) = ADP-alpha-D-glucose + diphosphate. Its pathway is glycan biosynthesis; glycogen biosynthesis. Functionally, involved in the biosynthesis of ADP-glucose, a building block required for the elongation reactions to produce glycogen. Catalyzes the reaction between ATP and alpha-D-glucose 1-phosphate (G1P) to produce pyrophosphate and ADP-Glc. This chain is Glucose-1-phosphate adenylyltransferase, found in Leifsonia xyli subsp. xyli (strain CTCB07).